Consider the following 21-residue polypeptide: Japonicin-2 (21 aa).

Cysteines 14 and 21 form a disulfide.

Expressed by the skin glands.

The protein localises to the secreted. Its function is as follows. Antibacterial activity against the Gram-negative bacterium E.coli and the Gram-positive bacterium S.aureus. This Rana japonica (Japanese reddish frog) protein is Japonicin-2.